The following is a 262-amino-acid chain: Small ribosomal subunit protein mS23 (262 aa).

The segment covering alanine 242–alanine 254 has biased composition (acidic residues). The segment at alanine 242–alanine 262 is disordered.

It belongs to the mitochondrion-specific ribosomal protein mS23 family. In terms of assembly, component of the mitochondrial small ribosomal subunit.

The protein resides in the mitochondrion. This Aspergillus niger (strain ATCC MYA-4892 / CBS 513.88 / FGSC A1513) protein is Small ribosomal subunit protein mS23 (rsm25).